We begin with the raw amino-acid sequence, 416 residues long: Phosphatidylinositol 5-phosphate 4-kinase type-2 beta (416 aa).

S2 bears the N-acetylserine mark. Phosphothreonine is present on T8. A Phosphoserine modification is found at S19. In terms of domain architecture, PIPK spans A38–L415. A required for interaction with PIP5K1A region spans residues V64–D70. N6-acetyllysine is present on residues K94 and K150. Residues R202–V204 and K214 contribute to the ATP site. GTP contacts are provided by residues N203–V204 and K214. At T322 the chain carries Phosphothreonine. At S326 the chain carries Phosphoserine. D369 contacts GTP.

In terms of assembly, homodimer. Binds TNFRSF1A. Interacts with PIP4K2A; the interaction suppresses ubiquitination by the SPOP/CUL3 complex. Probably interacts with PIP5K1A; the interaction inhibits PIP5K1A kinase activity. Ubiquitinated by the SPOP/CUL3 complex. Ubiquitination is stimulated by PtdIns5P levels. In terms of processing, phosphorylated on serine residues.

The protein localises to the endoplasmic reticulum membrane. Its subcellular location is the cell membrane. The protein resides in the nucleus. It is found in the cytoplasm. It catalyses the reaction a 1,2-diacyl-sn-glycero-3-phospho-(1D-myo-inositol-5-phosphate) + ATP = a 1,2-diacyl-sn-glycero-3-phospho-(1D-myo-inositol-4,5-bisphosphate) + ADP + H(+). The enzyme catalyses 1,2-dihexadecanoyl-sn-glycero-3-phospho-(1D-myo-inositol-5-phosphate) + ATP = 1,2-dihexadecanoyl-sn-glycero-3-phospho-(1D-myo-inositol-4,5-bisphosphate) + ADP + H(+). The catalysed reaction is 1,2-dihexadecanoyl-sn-glycero-3-phospho-(1D-myo-inositol-5-phosphate) + GTP = 1,2-dihexadecanoyl-sn-glycero-3-phospho-(1D-myo-inositol-4,5-bisphosphate) + GDP + H(+). In terms of biological role, participates in the biosynthesis of phosphatidylinositol 4,5-bisphosphate. Preferentially utilizes GTP, rather than ATP, for PI(5)P phosphorylation and its activity reflects changes in direct proportion to the physiological GTP concentration. Its GTP-sensing activity is critical for metabolic adaptation. In collaboration with PIP4K2A, has a role in mediating autophagy in times of nutrient stress. Required for autophagosome-lysosome fusion and the regulation of cellular lipid metabolism. PIP4Ks negatively regulate insulin signaling through a catalytic-independent mechanism. They interact with PIP5Ks and suppress PIP5K-mediated PtdIns(4,5)P2 synthesis and insulin-dependent conversion to PtdIns(3,4,5)P3. The sequence is that of Phosphatidylinositol 5-phosphate 4-kinase type-2 beta from Mus musculus (Mouse).